The chain runs to 303 residues: Bifunctional protein FolD 2 (303 aa).

NADP(+) contacts are provided by residues 169 to 171 (GRS), Ser-194, and Ile-235.

The protein belongs to the tetrahydrofolate dehydrogenase/cyclohydrolase family. As to quaternary structure, homodimer.

The catalysed reaction is (6R)-5,10-methylene-5,6,7,8-tetrahydrofolate + NADP(+) = (6R)-5,10-methenyltetrahydrofolate + NADPH. The enzyme catalyses (6R)-5,10-methenyltetrahydrofolate + H2O = (6R)-10-formyltetrahydrofolate + H(+). It participates in one-carbon metabolism; tetrahydrofolate interconversion. Its function is as follows. Catalyzes the oxidation of 5,10-methylenetetrahydrofolate to 5,10-methenyltetrahydrofolate and then the hydrolysis of 5,10-methenyltetrahydrofolate to 10-formyltetrahydrofolate. In Pseudomonas putida (strain GB-1), this protein is Bifunctional protein FolD 2.